Reading from the N-terminus, the 105-residue chain is Mini zinc finger protein 2 (105 aa).

Residues 1–29 (MGPQQDRSAAKPYANGSTAAAAAAGRKEN) are disordered. A ZF-HD dimerization-type; degenerate zinc finger spans residues 35–84 (YRECQRNHAASIGGHAVDGCREFMASGADGTAAALLCAACGCHQSFHRRE).

As to quaternary structure, homo- and heterodimers.

It localises to the cytoplasm. Functionally, inhibits zinc finger homeodomain (ZHD) transcription factors, by interacting with them to prevent both their nuclear localization and their DNA-binding properties. The chain is Mini zinc finger protein 2 (MIF2) from Oryza sativa subsp. indica (Rice).